Here is a 340-residue protein sequence, read N- to C-terminus: Ketol-acid reductoisomerase (NADP(+)) (340 aa).

One can recognise a KARI N-terminal Rossmann domain in the interval valine 3–threonine 182. NADP(+) is bound by residues tyrosine 26–glutamine 29, arginine 49, serine 53, and aspartate 83–glutamine 86. Residue histidine 108 is part of the active site. Residue glycine 134 coordinates NADP(+). The KARI C-terminal knotted domain maps to threonine 183–valine 328. Residues aspartate 191, glutamate 195, glutamate 227, and glutamate 231 each coordinate Mg(2+). Serine 252 is a binding site for substrate.

It belongs to the ketol-acid reductoisomerase family. It depends on Mg(2+) as a cofactor.

The catalysed reaction is (2R)-2,3-dihydroxy-3-methylbutanoate + NADP(+) = (2S)-2-acetolactate + NADPH + H(+). The enzyme catalyses (2R,3R)-2,3-dihydroxy-3-methylpentanoate + NADP(+) = (S)-2-ethyl-2-hydroxy-3-oxobutanoate + NADPH + H(+). It participates in amino-acid biosynthesis; L-isoleucine biosynthesis; L-isoleucine from 2-oxobutanoate: step 2/4. The protein operates within amino-acid biosynthesis; L-valine biosynthesis; L-valine from pyruvate: step 2/4. Functionally, involved in the biosynthesis of branched-chain amino acids (BCAA). Catalyzes an alkyl-migration followed by a ketol-acid reduction of (S)-2-acetolactate (S2AL) to yield (R)-2,3-dihydroxy-isovalerate. In the isomerase reaction, S2AL is rearranged via a Mg-dependent methyl migration to produce 3-hydroxy-3-methyl-2-ketobutyrate (HMKB). In the reductase reaction, this 2-ketoacid undergoes a metal-dependent reduction by NADPH to yield (R)-2,3-dihydroxy-isovalerate. This Streptococcus pneumoniae (strain Hungary19A-6) protein is Ketol-acid reductoisomerase (NADP(+)).